The primary structure comprises 674 residues: Membrane-anchored lipid-binding protein LAM5 (674 aa).

Disordered stretches follow at residues 1–52 (MSDV…LNTE) and 65–151 (NQSA…GSPL). Over 1 to 633 (MSDVDNWEPV…AEQQGLKVTM (633 aa)) the chain is Cytoplasmic. Over residues 69–81 (ADEHPTEIKHDQS) the composition is skewed to basic and acidic residues. Residues 82-119 (RTSSTSSFFSGMISSFKSNVPSPVSRSTTPTSPVSQPS) show a composition bias toward low complexity. The residue at position 110 (T110) is a Phosphothreonine. A phosphoserine mark is found at S113 and S140. T143 carries the phosphothreonine modification. Residue S149 is modified to Phosphoserine. The 67-residue stretch at 198 to 264 (KDFHETFKSV…FEDVTFMEKT (67 aa)) folds into the GRAM domain. Residues 336–357 (IDEENNDKDANDNDTNENDDEN) show a composition bias toward acidic residues. Residues 336–380 (IDEENNDKDANDNDTNENDDENISTNETTPNSTSSSPDKEKEKAY) are disordered. A compositionally biased stretch (low complexity) spans 358–371 (ISTNETTPNSTSSS). The region spanning 409–582 (NEFVLKELPF…ILSKFIKNNV (174 aa)) is the VASt domain. The helical transmembrane segment at 634–654 (ETWLFLYLIVVVLLLFNLFYI) threads the bilayer. Residues 655-674 (RSIAVSLHQLVKLQLVELKL) are Lumenal-facing.

It belongs to the YSP2 family.

The protein resides in the endoplasmic reticulum membrane. In terms of biological role, may be involved in sterol transfer between intracellular membranes. In Saccharomyces cerevisiae (strain ATCC 204508 / S288c) (Baker's yeast), this protein is Membrane-anchored lipid-binding protein LAM5.